We begin with the raw amino-acid sequence, 907 residues long: Protein translocase subunit SecA (907 aa).

Residues Q87, G105–T109, and D512 each bind ATP. Residues A862 to K885 are disordered. Residues D867–K885 show a composition bias toward basic and acidic residues. Zn(2+)-binding residues include C892, C894, C903, and H904.

The protein belongs to the SecA family. Monomer and homodimer. Part of the essential Sec protein translocation apparatus which comprises SecA, SecYEG and auxiliary proteins SecDF-YajC and YidC. It depends on Zn(2+) as a cofactor.

It localises to the cell inner membrane. The protein resides in the cytoplasm. The catalysed reaction is ATP + H2O + cellular proteinSide 1 = ADP + phosphate + cellular proteinSide 2.. In terms of biological role, part of the Sec protein translocase complex. Interacts with the SecYEG preprotein conducting channel. Has a central role in coupling the hydrolysis of ATP to the transfer of proteins into and across the cell membrane, serving both as a receptor for the preprotein-SecB complex and as an ATP-driven molecular motor driving the stepwise translocation of polypeptide chains across the membrane. The polypeptide is Protein translocase subunit SecA (Aliivibrio salmonicida (strain LFI1238) (Vibrio salmonicida (strain LFI1238))).